A 244-amino-acid chain; its full sequence is Phosphoadenosine 5'-phosphosulfate reductase (244 aa).

Cys239 (nucleophile; cysteine thiosulfonate intermediate) is an active-site residue.

Belongs to the PAPS reductase family. CysH subfamily.

Its subcellular location is the cytoplasm. The catalysed reaction is [thioredoxin]-disulfide + sulfite + adenosine 3',5'-bisphosphate + 2 H(+) = [thioredoxin]-dithiol + 3'-phosphoadenylyl sulfate. It functions in the pathway sulfur metabolism; hydrogen sulfide biosynthesis; sulfite from sulfate: step 3/3. In terms of biological role, catalyzes the formation of sulfite from phosphoadenosine 5'-phosphosulfate (PAPS) using thioredoxin as an electron donor. The polypeptide is Phosphoadenosine 5'-phosphosulfate reductase (Photorhabdus laumondii subsp. laumondii (strain DSM 15139 / CIP 105565 / TT01) (Photorhabdus luminescens subsp. laumondii)).